Consider the following 367-residue polypeptide: Alanine racemase (367 aa).

K40 acts as the Proton acceptor; specific for D-alanine in catalysis. The residue at position 40 (K40) is an N6-(pyridoxal phosphate)lysine. R136 contributes to the substrate binding site. The active-site Proton acceptor; specific for L-alanine is Y263. M310 contributes to the substrate binding site.

This sequence belongs to the alanine racemase family. Requires pyridoxal 5'-phosphate as cofactor.

It catalyses the reaction L-alanine = D-alanine. It participates in amino-acid biosynthesis; D-alanine biosynthesis; D-alanine from L-alanine: step 1/1. Its function is as follows. Catalyzes the interconversion of L-alanine and D-alanine. May also act on other amino acids. The polypeptide is Alanine racemase (alr) (Streptococcus thermophilus (strain ATCC BAA-250 / LMG 18311)).